Consider the following 156-residue polypeptide: Regulatory protein RecX (156 aa).

Belongs to the RecX family.

The protein localises to the cytoplasm. Modulates RecA activity. This is Regulatory protein RecX from Pseudomonas putida (strain GB-1).